A 519-amino-acid chain; its full sequence is Steroid 17-alpha-hydroxylase/17,20 lyase (519 aa).

Cysteine 455 is a heme binding site.

It belongs to the cytochrome P450 family. Heme serves as cofactor.

It is found in the membrane. The enzyme catalyses a C21-steroid + reduced [NADPH--hemoprotein reductase] + O2 = a 17alpha-hydroxy-C21-steroid + oxidized [NADPH--hemoprotein reductase] + H2O + H(+). It catalyses the reaction 17alpha-hydroxyprogesterone + reduced [NADPH--hemoprotein reductase] + O2 = androst-4-ene-3,17-dione + acetate + oxidized [NADPH--hemoprotein reductase] + H2O + 2 H(+). The catalysed reaction is 17alpha-hydroxypregnenolone + reduced [NADPH--hemoprotein reductase] + O2 = 3beta-hydroxyandrost-5-en-17-one + acetate + oxidized [NADPH--hemoprotein reductase] + H2O + 2 H(+). The protein operates within lipid metabolism; steroid biosynthesis. Functionally, conversion of pregnenolone and progesterone to their 17-alpha-hydroxylated products and subsequently to dehydroepiandrosterone (DHEA) and androstenedione. Catalyzes both the 17-alpha-hydroxylation and the 17,20-lyase reaction. The sequence is that of Steroid 17-alpha-hydroxylase/17,20 lyase (CYP17A1) from Rana dybowskii (Dybovsky's frog).